The primary structure comprises 564 residues: Formate--tetrahydrofolate ligase (564 aa).

65–72 is a binding site for ATP; sequence TPLGEGKT.

This sequence belongs to the formate--tetrahydrofolate ligase family.

The enzyme catalyses (6S)-5,6,7,8-tetrahydrofolate + formate + ATP = (6R)-10-formyltetrahydrofolate + ADP + phosphate. The protein operates within one-carbon metabolism; tetrahydrofolate interconversion. The sequence is that of Formate--tetrahydrofolate ligase from Roseiflexus sp. (strain RS-1).